We begin with the raw amino-acid sequence, 185 residues long: GTP cyclohydrolase 1 (185 aa).

Cysteine 76, histidine 79, and cysteine 147 together coordinate Zn(2+).

Belongs to the GTP cyclohydrolase I family. As to quaternary structure, toroid-shaped homodecamer, composed of two pentamers of five dimers.

It catalyses the reaction GTP + H2O = 7,8-dihydroneopterin 3'-triphosphate + formate + H(+). It participates in cofactor biosynthesis; 7,8-dihydroneopterin triphosphate biosynthesis; 7,8-dihydroneopterin triphosphate from GTP: step 1/1. The chain is GTP cyclohydrolase 1 from Clostridium perfringens (strain ATCC 13124 / DSM 756 / JCM 1290 / NCIMB 6125 / NCTC 8237 / Type A).